Reading from the N-terminus, the 102-residue chain is Small ribosomal subunit protein uS10 (102 aa).

It belongs to the universal ribosomal protein uS10 family. Part of the 30S ribosomal subunit.

In terms of biological role, involved in the binding of tRNA to the ribosomes. The protein is Small ribosomal subunit protein uS10 of Pelotomaculum thermopropionicum (strain DSM 13744 / JCM 10971 / SI).